The primary structure comprises 79 residues: Conotoxin LiCr173 (79 aa).

A signal peptide spans methionine 1–serine 20. A propeptide spanning residues histidine 21–arginine 46 is cleaved from the precursor. Intrachain disulfides connect cysteine 52–cysteine 64, cysteine 56–cysteine 73, and cysteine 63–cysteine 77. Phenylalanine amide is present on phenylalanine 78.

This sequence belongs to the conotoxin O3 superfamily. In terms of tissue distribution, expressed by the venom duct.

Its subcellular location is the secreted. The protein is Conotoxin LiCr173 of Conus lividus (Livid cone).